Consider the following 431-residue polypeptide: Enolase (431 aa).

Q163 provides a ligand contact to (2R)-2-phosphoglycerate. E205 functions as the Proton donor in the catalytic mechanism. The Mg(2+) site is built by D242, E288, and D315. The (2R)-2-phosphoglycerate site is built by K340, R369, S370, and K391. K340 acts as the Proton acceptor in catalysis.

This sequence belongs to the enolase family. Mg(2+) serves as cofactor.

The protein localises to the cytoplasm. The protein resides in the secreted. It localises to the cell surface. It catalyses the reaction (2R)-2-phosphoglycerate = phosphoenolpyruvate + H2O. It functions in the pathway carbohydrate degradation; glycolysis; pyruvate from D-glyceraldehyde 3-phosphate: step 4/5. Catalyzes the reversible conversion of 2-phosphoglycerate (2-PG) into phosphoenolpyruvate (PEP). It is essential for the degradation of carbohydrates via glycolysis. The polypeptide is Enolase (Latilactobacillus sakei subsp. sakei (strain 23K) (Lactobacillus sakei subsp. sakei)).